Here is a 303-residue protein sequence, read N- to C-terminus: Aspartate carbamoyltransferase catalytic subunit (303 aa).

Residues Arg54 and Thr55 each coordinate carbamoyl phosphate. Residue Lys82 coordinates L-aspartate. Residues Arg104, His132, and Gln135 each contribute to the carbamoyl phosphate site. L-aspartate-binding residues include Arg165 and Arg221. The carbamoyl phosphate site is built by Gly261 and Pro262.

This sequence belongs to the aspartate/ornithine carbamoyltransferase superfamily. ATCase family. As to quaternary structure, heterododecamer (2C3:3R2) of six catalytic PyrB chains organized as two trimers (C3), and six regulatory PyrI chains organized as three dimers (R2).

It carries out the reaction carbamoyl phosphate + L-aspartate = N-carbamoyl-L-aspartate + phosphate + H(+). Its pathway is pyrimidine metabolism; UMP biosynthesis via de novo pathway; (S)-dihydroorotate from bicarbonate: step 2/3. Functionally, catalyzes the condensation of carbamoyl phosphate and aspartate to form carbamoyl aspartate and inorganic phosphate, the committed step in the de novo pyrimidine nucleotide biosynthesis pathway. The sequence is that of Aspartate carbamoyltransferase catalytic subunit from Koribacter versatilis (strain Ellin345).